The sequence spans 350 residues: 3-dehydroquinate synthase (350 aa).

NAD(+) is bound by residues G106–D110, T130–S131, K143, and K152. Residues E185, H246, and H263 each contribute to the Zn(2+) site.

This sequence belongs to the sugar phosphate cyclases superfamily. Dehydroquinate synthase family. Requires NAD(+) as cofactor. Co(2+) serves as cofactor. The cofactor is Zn(2+).

It is found in the cytoplasm. The enzyme catalyses 7-phospho-2-dehydro-3-deoxy-D-arabino-heptonate = 3-dehydroquinate + phosphate. Its pathway is metabolic intermediate biosynthesis; chorismate biosynthesis; chorismate from D-erythrose 4-phosphate and phosphoenolpyruvate: step 2/7. Its function is as follows. Catalyzes the conversion of 3-deoxy-D-arabino-heptulosonate 7-phosphate (DAHP) to dehydroquinate (DHQ). The chain is 3-dehydroquinate synthase from Clostridium perfringens (strain 13 / Type A).